A 206-amino-acid chain; its full sequence is Large ribosomal subunit protein uL4 (206 aa).

A disordered region spans residues N47 to D94. Residues A49–K58 show a composition bias toward basic and acidic residues. The segment covering S59 to A74 has biased composition (basic residues).

This sequence belongs to the universal ribosomal protein uL4 family. As to quaternary structure, part of the 50S ribosomal subunit.

One of the primary rRNA binding proteins, this protein initially binds near the 5'-end of the 23S rRNA. It is important during the early stages of 50S assembly. It makes multiple contacts with different domains of the 23S rRNA in the assembled 50S subunit and ribosome. In terms of biological role, forms part of the polypeptide exit tunnel. The chain is Large ribosomal subunit protein uL4 from Laribacter hongkongensis (strain HLHK9).